The following is a 226-amino-acid chain: MKIKKHKFPGVYVFIDEDGSEKIATKNLVPGQKVYGERLIKFEGEEYRVWNPRRSKLGAAILNGLKHFPIKPGSTVLYLGVASGTTASHVSDIVGWEGKVFGVEFSPRVLRELVPIVEERRNIVPILGDATKPEGYRALVPKVDVIFEDVAQPTQAKILIDNAKVFLKSGGYGMISVKSRSIDVTKEPEQVFKEVEKELATYFEVVERLSLEPYEKDHALFVVRKP.

S-adenosyl-L-methionine-binding positions include Thr85 to Thr86, Glu104 to Phe105, Asp129 to Ala130, and Asp149 to Gln152.

The protein belongs to the methyltransferase superfamily. Fibrillarin family. As to quaternary structure, interacts with nop5. Component of box C/D small ribonucleoprotein (sRNP) particles that contain rpl7ae, FlpA and nop5, plus a guide RNA.

Its function is as follows. Involved in pre-rRNA and tRNA processing. Utilizes the methyl donor S-adenosyl-L-methionine to catalyze the site-specific 2'-hydroxyl methylation of ribose moieties in rRNA and tRNA. Site specificity is provided by a guide RNA that base pairs with the substrate. Methylation occurs at a characteristic distance from the sequence involved in base pairing with the guide RNA. The sequence is that of Fibrillarin-like rRNA/tRNA 2'-O-methyltransferase from Thermococcus onnurineus (strain NA1).